Consider the following 99-residue polypeptide: UPF0751 protein BCE_A0020 (99 aa).

This sequence belongs to the UPF0751 family.

This chain is UPF0751 protein BCE_A0020, found in Bacillus cereus (strain ATCC 10987 / NRS 248).